The sequence spans 712 residues: Polyribonucleotide nucleotidyltransferase (712 aa).

Positions 485 and 491 each coordinate Mg(2+). Residues 552–611 enclose the KH domain; it reads PKITTISVPKEKIRDVIGQGGKVIREIVEYSGAKIDINDDGTIMIAASSEDQATRAIERI. In terms of domain architecture, S1 motif spans 621–689; that stretch reads GAIYTGKVVK…DRGKVKLSMR (69 aa).

It belongs to the polyribonucleotide nucleotidyltransferase family. It depends on Mg(2+) as a cofactor.

It is found in the cytoplasm. The catalysed reaction is RNA(n+1) + phosphate = RNA(n) + a ribonucleoside 5'-diphosphate. Its function is as follows. Involved in mRNA degradation. Catalyzes the phosphorolysis of single-stranded polyribonucleotides processively in the 3'- to 5'-direction. This chain is Polyribonucleotide nucleotidyltransferase, found in Gluconacetobacter diazotrophicus (strain ATCC 49037 / DSM 5601 / CCUG 37298 / CIP 103539 / LMG 7603 / PAl5).